Consider the following 82-residue polypeptide: Penaeidin-3b (82 aa).

The N-terminal stretch at 1-19 (MRLVVCLVFLASFALVCQG) is a signal peptide. Gln20 is modified (pyrrolidone carboxylic acid). Disulfide bonds link Cys51–Cys66, Cys55–Cys73, and Cys67–Cys74. Ser81 bears the Serine amide mark.

It belongs to the penaeidin family. As to expression, higher expression in hemocytes and to a lesser extent in heart, testis, gills, intestine, lymphoid organ and hepatopancreas. Traces in eyes and subcuticular epithelium. Not present in the brain.

It is found in the cytoplasmic granule. In terms of biological role, antibacterial activity against M.luteus and E.coli bacteria. Antifungal activity against N.crassa and F.oxysporum. Presents chitin-binding activity. The polypeptide is Penaeidin-3b (Penaeus vannamei (Whiteleg shrimp)).